The primary structure comprises 499 residues: MGEGAWWAVAAVVAALAVVALDAAVRAAHAWYWTASLGAGRRGRLPPGDMGWPLVGGMWAFLRAFKSGRPDSFIDSFARRFGRAGLYRAFMFSSPTIMATTPEACKQVLMDDDAFVTGWPKATVALIGPKSFVNMGYDEHRRLRKLTAAPINGFDALTSYLGFIDDTVVTTLRGWSERGGDGHFEFLTELRRMTFRIIVQIFMGGADERTAAELERTYTELNYGMRAMAIDLPGFAYHKAIRARRRLVAALQRVLDERRARGGKTAAGAAAPVDMMDRLIAVEDEGGRRLQDDEIIDVLVMYLNAGHESSGHITMWATVFLQENPEILAKAKAEQEAIMRSIPPGQKGLTLRDFRKMAYLSQVVDETLRFVNISFVSFRQATRDVFVNGYLIPKGWKVQLWYRSVHMDPQVYPDPKKFDPSRWEGPPPRAGTFLPFGLGTRLCPGNDLAKLEISVFLHHFLLGYKLTRKNPNCRVRYLPHPRPVDNCLAKITRLSSSHG.

A helical membrane pass occupies residues 5–25 (AWWAVAAVVAALAVVALDAAV). Cys-443 is a heme binding site.

The protein belongs to the cytochrome P450 family. Heme is required as a cofactor.

The protein resides in the endoplasmic reticulum membrane. It catalyses the reaction ent-kaur-16-en-19-oate + 3 reduced [NADPH--hemoprotein reductase] + 3 O2 = gibberellin A12 + 3 oxidized [NADPH--hemoprotein reductase] + 4 H2O + 4 H(+). The catalysed reaction is ent-kaur-16-en-19-oate + reduced [NADPH--hemoprotein reductase] + O2 = ent-7alpha-hydroxykaur-16-en-19-oate + oxidized [NADPH--hemoprotein reductase] + H2O + H(+). It carries out the reaction ent-7alpha-hydroxykaur-16-en-19-oate + reduced [NADPH--hemoprotein reductase] + O2 = gibberellin A12 aldehyde + oxidized [NADPH--hemoprotein reductase] + 2 H2O + H(+). The enzyme catalyses gibberellin A12 aldehyde + reduced [NADPH--hemoprotein reductase] + O2 = gibberellin A12 + oxidized [NADPH--hemoprotein reductase] + H2O + 2 H(+). It functions in the pathway plant hormone biosynthesis; gibberellin biosynthesis. Functionally, catalyzes three successive oxidations of ent-kaurenoic acid giving gibberellin 12 (GA12), a key step in gibberellins (GAs) biosynthesis. GAs, which are involved many processes, including stem elongation, play a central role in plant development. The chain is Ent-kaurenoic acid oxidase 1 from Hordeum vulgare (Barley).